A 227-amino-acid polypeptide reads, in one-letter code: MICOS complex subunit Mic19 (227 aa).

Glycine 2 carries the N-myristoyl glycine lipid modification. Residue serine 29 is modified to Phosphoserine. Residues 32–57 (VIDRMKESSPSGSKSQRYSSVYGASV) are disordered. Residues 39–50 (SSPSGSKSQRYS) show a composition bias toward polar residues. A Phosphotyrosine modification is found at tyrosine 49. Residues serine 50, serine 51, serine 56, and serine 58 each carry the phosphoserine modification. The disordered stretch occupies residues 73 to 92 (EQAKKESEHQRRLKQARDLE). An N6-acetyllysine modification is found at lysine 142. The region spanning 180-222 (HPVCADLQTKILQCYRQNTQQTLSCSALASQYMHCVNHAKQSM) is the CHCH domain. Short sequence motifs (cx9C motif) lie at residues 183–193 (CADLQTKILQC) and 204–214 (CSALASQYMHC). Intrachain disulfides connect cysteine 183-cysteine 214 and cysteine 193-cysteine 204.

It belongs to the MICOS complex subunit Mic19 family. Metazoan Mic19 subfamily. In terms of assembly, component of the mitochondrial contact site and cristae organizing system (MICOS) complex, composed of at least MICOS10/MIC10, CHCHD3/MIC19, CHCHD6/MIC25, APOOL/MIC27, IMMT/MIC60, APOO/MIC23/MIC26 and MICOS13/MIC13. This complex was also known under the names MINOS or MitOS complex. The MICOS complex associates with mitochondrial outer membrane proteins SAMM50, MTX1 and MTX2 (together described as components of the mitochondrial outer membrane sorting assembly machinery (SAM) complex) and DNAJC11, mitochondrial inner membrane protein TMEM11 and with HSPA9. The MICOS and SAM complexes together with DNAJC11 are part of a large protein complex spanning both membranes termed the mitochondrial intermembrane space bridging (MIB) complex. Interacts with HSPA1A/HSPA1B and OPA1, preferentially with the soluble OPA1 form.

It is found in the mitochondrion inner membrane. The protein localises to the cytoplasm. The protein resides in the nucleus. Its subcellular location is the mitochondrion. Component of the MICOS complex, a large protein complex of the mitochondrial inner membrane that plays crucial roles in the maintenance of crista junctions, inner membrane architecture, and formation of contact sites to the outer membrane. Has also been shown to function as a transcription factor which binds to the BAG1 promoter and represses BAG1 transcription. Plays an important role in the maintenance of the MICOS complex stability and the mitochondrial cristae morphology. The chain is MICOS complex subunit Mic19 (Chchd3) from Mus musculus (Mouse).